We begin with the raw amino-acid sequence, 336 residues long: Aspartate--ammonia ligase (336 aa).

The protein belongs to the class-II aminoacyl-tRNA synthetase family. AsnA subfamily.

It localises to the cytoplasm. It carries out the reaction L-aspartate + NH4(+) + ATP = L-asparagine + AMP + diphosphate + H(+). The protein operates within amino-acid biosynthesis; L-asparagine biosynthesis; L-asparagine from L-aspartate (ammonia route): step 1/1. The protein is Aspartate--ammonia ligase of Ligilactobacillus salivarius (strain UCC118) (Lactobacillus salivarius).